A 103-amino-acid chain; its full sequence is Large ribosomal subunit protein bL28 (103 aa).

This sequence belongs to the bacterial ribosomal protein bL28 family.

In Anaplasma marginale (strain St. Maries), this protein is Large ribosomal subunit protein bL28.